Consider the following 139-residue polypeptide: MCVCRVDILSRFDIALSLLQSLTHSHTVLRHLCFLPTIIYKHLCEFTISFSSPVISTGQHIDVGDEDYHDGDDDVDYTDDVDDVDDPHGSPSQLLQGGYQRNQHYGGGNYQSGYYRPNKQHGNGYGGQYPKKYGSGYKH.

The disordered stretch occupies residues 61 to 139 (IDVGDEDYHD…PKKYGSGYKH (79 aa)). The segment covering 64 to 85 (GDEDYHDGDDDVDYTDDVDDVD) has biased composition (acidic residues). Positions 90 to 103 (SPSQLLQGGYQRNQ) are enriched in polar residues.

This sequence belongs to the immunogenic miracidial antigen family.

The sequence is that of Immunogenic miracidial antigen 8I' (8I') from Schistosoma japonicum (Blood fluke).